Reading from the N-terminus, the 395-residue chain is DDB1- and CUL4-associated factor 4-like protein 2 (395 aa).

WD repeat units follow at residues 268-307 (SHDSAVTSLQILQDGQFLVSSDMTGTIKLWDLRATKCVTQ) and 312-351 (VNNSAYLPVHVNEEEGVVAAVGQDCYTRIWSLRHGHLLTT).

This chain is DDB1- and CUL4-associated factor 4-like protein 2 (DCAF4L2), found in Homo sapiens (Human).